The following is a 387-amino-acid chain: Capsid protein (387 aa).

Residues 1–33 are compositionally biased toward basic residues; sequence MARTKSKPRKRTTVRKARRSVKRRTTTKGTKRK. 2 disordered regions span residues 1-47 and 365-387; these read MART…RGVA and KSAKINDQLNNNQDAANKKREFN. 2 short sequence motifs (nuclear localization signal) span residues 8–15 and 30–37; these read PRKRTTVR and TKRKTAGD. The segment covering 370–379 has biased composition (low complexity); sequence NDQLNNNQDA.

It localises to the host nucleus. The protein resides in the virion. Functionally, self-assembles to form the virion icosahedral capsid. The polypeptide is Capsid protein (Chaetoceros protobacilladnavirus 2 (Chaetoceros sp. DNA virus 7)).